The sequence spans 141 residues: Large ribosomal subunit protein uL11 (141 aa).

This sequence belongs to the universal ribosomal protein uL11 family. Part of the ribosomal stalk of the 50S ribosomal subunit. Interacts with L10 and the large rRNA to form the base of the stalk. L10 forms an elongated spine to which L12 dimers bind in a sequential fashion forming a multimeric L10(L12)X complex. Post-translationally, one or more lysine residues are methylated.

Forms part of the ribosomal stalk which helps the ribosome interact with GTP-bound translation factors. The polypeptide is Large ribosomal subunit protein uL11 (Nostoc punctiforme (strain ATCC 29133 / PCC 73102)).